A 346-amino-acid polypeptide reads, in one-letter code: Protein RecA (346 aa).

67–74 (GPESSGKT) serves as a coordination point for ATP.

The protein belongs to the RecA family.

The protein localises to the cytoplasm. Its function is as follows. Can catalyze the hydrolysis of ATP in the presence of single-stranded DNA, the ATP-dependent uptake of single-stranded DNA by duplex DNA, and the ATP-dependent hybridization of homologous single-stranded DNAs. It interacts with LexA causing its activation and leading to its autocatalytic cleavage. The chain is Protein RecA from Frankia alni (strain DSM 45986 / CECT 9034 / ACN14a).